The sequence spans 177 residues: MAEFATIARPYAKALFGLAQEKSQIESWLGGLEKLAAVVQEGKVASLIDRPETNASEKADILIDLVGLKDKELKNFVIVLAGQKRLSILPEVYAQYQDLTLSFNHIKSAVIYSAYPLTDKQVGELAQMLNKRFDSELKISVEIEPELIGGIKVEVGDQVLDLSVRGKLSALYTTMTN.

It belongs to the ATPase delta chain family. In terms of assembly, F-type ATPases have 2 components, F(1) - the catalytic core - and F(0) - the membrane proton channel. F(1) has five subunits: alpha(3), beta(3), gamma(1), delta(1), epsilon(1). F(0) has three main subunits: a(1), b(2) and c(10-14). The alpha and beta chains form an alternating ring which encloses part of the gamma chain. F(1) is attached to F(0) by a central stalk formed by the gamma and epsilon chains, while a peripheral stalk is formed by the delta and b chains.

It localises to the cell inner membrane. Its function is as follows. F(1)F(0) ATP synthase produces ATP from ADP in the presence of a proton or sodium gradient. F-type ATPases consist of two structural domains, F(1) containing the extramembraneous catalytic core and F(0) containing the membrane proton channel, linked together by a central stalk and a peripheral stalk. During catalysis, ATP synthesis in the catalytic domain of F(1) is coupled via a rotary mechanism of the central stalk subunits to proton translocation. Functionally, this protein is part of the stalk that links CF(0) to CF(1). It either transmits conformational changes from CF(0) to CF(1) or is implicated in proton conduction. The chain is ATP synthase subunit delta from Neisseria meningitidis serogroup C (strain 053442).